We begin with the raw amino-acid sequence, 395 residues long: Neuromedin-U receptor 2 (395 aa).

Residues 1-41 lie on the Extracellular side of the membrane; sequence MGKLENASWIHDSLMKYLNSTEEYLAYLCGPKRSDLSLPVS. Asn-6 and Asn-19 each carry an N-linked (GlcNAc...) asparagine glycan. The helical transmembrane segment at 42 to 62 threads the bilayer; that stretch reads VVYALIFVVGVIGNLLVCLVI. Residues 63 to 74 are Cytoplasmic-facing; that stretch reads ARHQTLKTPTNY. Residues 75-95 form a helical membrane-spanning segment; sequence YLFSLAVSDLLVLLLGMPLEV. Topologically, residues 96–115 are extracellular; the sequence is YELWHNYPFLFGPVGCYFKT. Cys-111 and Cys-196 are oxidised to a cystine. A helical membrane pass occupies residues 116 to 138; it reads ALFETVCFASILSVTTVSIERYV. Topologically, residues 139–157 are cytoplasmic; sequence AIVHPFRAKLESTRRRALR. A helical transmembrane segment spans residues 158-178; it reads ILSLVWSFSVVFSLPNTSIHG. The Extracellular segment spans residues 179-212; sequence IKFQQFPNGSSVPGSATCTVTKPIWVYNFIIQAT. The N-linked (GlcNAc...) asparagine glycan is linked to Asn-186. Residues 213-233 traverse the membrane as a helical segment; sequence SFLFYILPMTLISVLYYLMGL. Topologically, residues 234 to 257 are cytoplasmic; the sequence is RLKRDESLEADKVTVNIHRPSRKS. The helical transmembrane segment at 258 to 278 threads the bilayer; that stretch reads VTKMLFVLVLVFAICWTPFHV. Residues 279–293 lie on the Extracellular side of the membrane; that stretch reads DRLFFSFVDEWTESL. A helical membrane pass occupies residues 294–314; sequence AAVFNLIHVVSGVFFYLSSAV. Residues 315–395 are Cytoplasmic-facing; it reads NPIIYNLLSR…TTVPCVEEVP (81 aa).

The protein belongs to the G-protein coupled receptor 1 family. As to expression, expressed primarily in brain tissues, more specifically in medulla and spinal cord. Widespread distribution in peripheral tissues.

It localises to the cell membrane. Receptor for the neuromedin-U and neuromedin-S neuropeptides. In Mus musculus (Mouse), this protein is Neuromedin-U receptor 2 (Nmur2).